We begin with the raw amino-acid sequence, 260 residues long: Global transcriptional regulator CodY (260 aa).

Residues M1–L159 form a GAF domain region. The H-T-H motif DNA-binding region spans A207 to R226.

It belongs to the CodY family.

It localises to the cytoplasm. DNA-binding global transcriptional regulator which is involved in the adaptive response to starvation and acts by directly or indirectly controlling the expression of numerous genes in response to nutrient availability. During rapid exponential growth, CodY is highly active and represses genes whose products allow adaptation to nutrient depletion. The protein is Global transcriptional regulator CodY of Streptococcus pyogenes serotype M3 (strain SSI-1).